We begin with the raw amino-acid sequence, 127 residues long: MAKQRLQQVADTMQRILGEVIQTELKDPRVGFASVTKVEVSADLQHAKVYISIMGTPEERATTMAALQRARGFLRKRVAEEMRHMRFIPELHLIEDTSIDYSLHINDVIRQIQHERMVNPPRIDDEQ.

The protein belongs to the RbfA family. In terms of assembly, monomer. Binds 30S ribosomal subunits, but not 50S ribosomal subunits or 70S ribosomes.

Its subcellular location is the cytoplasm. Its function is as follows. One of several proteins that assist in the late maturation steps of the functional core of the 30S ribosomal subunit. Associates with free 30S ribosomal subunits (but not with 30S subunits that are part of 70S ribosomes or polysomes). Required for efficient processing of 16S rRNA. May interact with the 5'-terminal helix region of 16S rRNA. The sequence is that of Ribosome-binding factor A from Chloroflexus aggregans (strain MD-66 / DSM 9485).